Here is a 212-residue protein sequence, read N- to C-terminus: Lysozyme g-like protein 2 (212 aa).

The N-terminal stretch at 1-19 (MLSSVVFWGLIALIGTSRG) is a signal peptide. 2 disulfide bridges follow: Cys39–Cys92 and Cys53–Cys61. Glu105 is an active-site residue.

This sequence belongs to the glycosyl hydrolase 23 family. In terms of tissue distribution, strong expression detected in the eye and weak expression in the testis. No expression is observed in any other tissues.

The protein localises to the secreted. Functionally, may act as a potent antibacterial protein that may play a role in the innate immunity. The sequence is that of Lysozyme g-like protein 2 (LYG2) from Homo sapiens (Human).